Reading from the N-terminus, the 570-residue chain is Glycine--tRNA ligase (570 aa).

Residues Arg-99 and Glu-165 each contribute to the substrate site. ATP is bound by residues 197 to 199, 207 to 212, 324 to 325, and 443 to 446; these read RNE, LRLREF, EC, and GIDR. 212–216 is a binding site for substrate; it reads FTQAE. 439-443 provides a ligand contact to substrate; that stretch reads EPSFG.

Belongs to the class-II aminoacyl-tRNA synthetase family.

Its subcellular location is the cytoplasm. The catalysed reaction is tRNA(Gly) + glycine + ATP = glycyl-tRNA(Gly) + AMP + diphosphate. In terms of biological role, catalyzes the attachment of glycine to tRNA(Gly). This is Glycine--tRNA ligase from Thermococcus gammatolerans (strain DSM 15229 / JCM 11827 / EJ3).